Consider the following 115-residue polypeptide: Large ribosomal subunit protein bL19 (115 aa).

The protein belongs to the bacterial ribosomal protein bL19 family.

This protein is located at the 30S-50S ribosomal subunit interface and may play a role in the structure and function of the aminoacyl-tRNA binding site. The chain is Large ribosomal subunit protein bL19 from Baumannia cicadellinicola subsp. Homalodisca coagulata.